The following is a 183-amino-acid chain: Ribosome-recycling factor (183 aa).

It belongs to the RRF family.

It localises to the cytoplasm. Functionally, responsible for the release of ribosomes from messenger RNA at the termination of protein biosynthesis. May increase the efficiency of translation by recycling ribosomes from one round of translation to another. The polypeptide is Ribosome-recycling factor (Mycoplasmoides gallisepticum (strain R(low / passage 15 / clone 2)) (Mycoplasma gallisepticum)).